A 377-amino-acid polypeptide reads, in one-letter code: Nitric oxide reductase FlRd-NAD(+) reductase (377 aa).

It belongs to the FAD-dependent oxidoreductase family. The cofactor is FAD.

The protein resides in the cytoplasm. The catalysed reaction is 2 reduced [nitric oxide reductase rubredoxin domain] + NAD(+) + H(+) = 2 oxidized [nitric oxide reductase rubredoxin domain] + NADH. The protein operates within nitrogen metabolism; nitric oxide reduction. Functionally, one of at least two accessory proteins for anaerobic nitric oxide (NO) reductase. Reduces the rubredoxin moiety of NO reductase. In Escherichia coli O9:H4 (strain HS), this protein is Nitric oxide reductase FlRd-NAD(+) reductase.